A 271-amino-acid polypeptide reads, in one-letter code: Phosphonoacetaldehyde hydrolase (271 aa).

The active-site Nucleophile is D12. Mg(2+) contacts are provided by D12 and A14. The active-site Schiff-base intermediate with substrate is the K54. D188 serves as a coordination point for Mg(2+).

The protein belongs to the HAD-like hydrolase superfamily. PhnX family. Homodimer. The cofactor is Mg(2+).

It carries out the reaction phosphonoacetaldehyde + H2O = acetaldehyde + phosphate + H(+). Functionally, involved in phosphonate degradation. The chain is Phosphonoacetaldehyde hydrolase from Vibrio cholerae serotype O1 (strain ATCC 39541 / Classical Ogawa 395 / O395).